The following is a 441-amino-acid chain: Vacuolar cation/proton exchanger 2 (441 aa).

Over 1–69 (MSCCKVPVLI…PKNSVLNSIK (69 aa)) the chain is Cytoplasmic. Residues 70–90 (IVIFCNKLNLLLPFGPLAILV) form a helical membrane-spanning segment. Over 91-97 (HYMIDSK) the chain is Extracellular. A helical transmembrane segment spans residues 98-118 (GWVFLLTLVGITPLAERLGYA). The Cytoplasmic portion of the chain corresponds to 119–129 (TEQLACYTGPT). The helical transmembrane segment at 130 to 150 (VGGLLNATFGNVTELIISIFA) threads the bilayer. The interval 139–174 (GNVTELIISIFALKNGMIRVVQLTLLGSILSNMLLV) is cation selection. At 151–166 (LKNGMIRVVQLTLLGS) the chain is on the extracellular side. The chain crosses the membrane as a helical span at residues 167–187 (ILSNMLLVLGCAFFCGGLVFY). The Cytoplasmic segment spans residues 188–196 (QKDQVFDKG). The helical transmembrane segment at 197 to 217 (IATVNSGLLLMAVMGILFPAV) threads the bilayer. Topologically, residues 218–231 (LHYTHSEVHAGSSE) are extracellular. The chain crosses the membrane as a helical span at residues 232 to 252 (LALSRFSSCIMLIAYAAYLFF). Residues 253 to 286 (QLKSQSNSYSPLDEESNQNEETSAEDEDPEISKW) lie on the Cytoplasmic side of the membrane. The chain crosses the membrane as a helical span at residues 287-307 (EAIIWLSILTAWVSLLSGYLV). Over 308-311 (DAIE) the chain is Extracellular. Residues 312–332 (GASVSWNIPIAFISTILLPIV) form a helical membrane-spanning segment. The Cytoplasmic segment spans residues 333 to 354 (GNAAEHAGAIMFAMKDKLDLSL). The interval 333–368 (GNAAEHAGAIMFAMKDKLDLSLGVAIGSSIQISMFA) is cation selection. The chain crosses the membrane as a helical span at residues 355–375 (GVAIGSSIQISMFAVPFCVVI). Residues 376-384 (GWMMGQQMD) lie on the Extracellular side of the membrane. Residues 385-405 (LNFQLFETAMLFITVIVVAFF) traverse the membrane as a helical segment. The Cytoplasmic segment spans residues 406 to 412 (LQEGSSN). A helical membrane pass occupies residues 413-433 (YFKGLMLILCYLIVAASFFVH). Topologically, residues 434 to 441 (EDPHQDGI) are extracellular.

This sequence belongs to the Ca(2+):cation antiporter (CaCA) (TC 2.A.19) family. Cation/proton exchanger (CAX) subfamily.

It localises to the vacuole membrane. Inhibited by excess of Ca(2+) and Cd(2+), Mn(2+), and Zn(2+). Functionally, vacuolar cation/proton exchanger (CAX). Translocates Ca(2+) and other metal ions into vacuoles using the proton gradient formed by H(+)-ATPase and H(+)-pyrophosphatase. The sequence is that of Vacuolar cation/proton exchanger 2 (CAX2) from Arabidopsis thaliana (Mouse-ear cress).